The sequence spans 379 residues: 3-dehydroquinate synthase (379 aa).

NAD(+)-binding positions include 67-72 (PGEKNK), 101-105 (GIILD), 125-126 (TT), Lys-138, and Lys-147. Glu-180, His-242, and His-258 together coordinate Zn(2+).

It belongs to the sugar phosphate cyclases superfamily. Dehydroquinate synthase family. The cofactor is NAD(+). Requires Co(2+) as cofactor. Zn(2+) is required as a cofactor.

Its subcellular location is the cytoplasm. It catalyses the reaction 7-phospho-2-dehydro-3-deoxy-D-arabino-heptonate = 3-dehydroquinate + phosphate. It functions in the pathway metabolic intermediate biosynthesis; chorismate biosynthesis; chorismate from D-erythrose 4-phosphate and phosphoenolpyruvate: step 2/7. Catalyzes the conversion of 3-deoxy-D-arabino-heptulosonate 7-phosphate (DAHP) to dehydroquinate (DHQ). The polypeptide is 3-dehydroquinate synthase (Chlamydia caviae (strain ATCC VR-813 / DSM 19441 / 03DC25 / GPIC) (Chlamydophila caviae)).